The sequence spans 161 residues: Nucleotide-binding protein Swoo_3646 (161 aa).

The protein belongs to the YajQ family.

Functionally, nucleotide-binding protein. The sequence is that of Nucleotide-binding protein Swoo_3646 from Shewanella woodyi (strain ATCC 51908 / MS32).